A 65-amino-acid polypeptide reads, in one-letter code: Conotoxin Cal16.1 (65 aa).

Positions 1–19 (MRCLSIFVLLVLLVSFAVA) are cleaved as a signal peptide. Positions 20-48 (ELDVEGEIVKQLLTRGTLKDADFWKRLEM) are excised as a propeptide. Gln49 carries the post-translational modification Pyrrolidone carboxylic acid. Cystine bridges form between Cys51–Cys60 and Cys53–Cys61. Position 63 is a glutamic acid 1-amide (Glu63).

Expressed by the venom duct.

Its subcellular location is the secreted. Its function is as follows. Probable neurotoxin with unknown target. Possibly targets ion channels. In Californiconus californicus (California cone), this protein is Conotoxin Cal16.1.